The sequence spans 782 residues: General transcription and DNA repair factor IIH helicase/translocase subunit XPB (782 aa).

Residues 1-11 are compositionally biased toward basic and acidic residues; sequence MGKRDRADRDK. Disordered regions lie at residues 1–51 and 218–241; these read MGKR…ESGT and SAIS…PQGK. Residues 6–18 carry the Nuclear localization signal motif; it reads RADRDKKKSRKRH. Over residues 21–30 the composition is skewed to acidic residues; it reads DEEDDEEDAP. Residues 218–236 show a composition bias toward polar residues; the sequence is SAISKTAESSGGPSTSRVT. The 162-residue stretch at 327-488 folds into the Helicase ATP-binding domain; that stretch reads MFGNGRARSG…DLNFLIGPKL (162 aa). Residue 340–347 participates in ATP binding; that stretch reads LPCGAGKS. The DEVH box signature appears at 441-444; that stretch reads DEVH. Positions 542 to 702 constitute a Helicase C-terminal domain; the sequence is RACQFLIKFH…LAGMEEEDLA (161 aa). Residues arginine 642 and arginine 645 each coordinate ATP. Position 686 is a phosphoserine (serine 686). Residue serine 751 is modified to Phosphoserine; by CK2.

Belongs to the helicase family. RAD25/XPB subfamily. In terms of assembly, component of the 7-subunit TFIIH core complex composed of XPB/ERCC3, XPD/ERCC2, GTF2H1, GTF2H2, GTF2H3, GTF2H4 and GTF2H5, which is active in NER. The core complex associates with the 3-subunit CDK-activating kinase (CAK) module composed of CCNH/cyclin H, CDK7 and MNAT1 to form the 10-subunit holoenzyme (holo-TFIIH) active in transcription. Interacts with PUF60. Interacts with ATF7IP. Interacts with KAT2A; leading to KAT2A recruitment to promoters and acetylation of histones. Part of TBP-based Pol II pre-initiation complex (PIC), in which Pol II core assembles with general transcription factors and other specific initiation factors including GTF2E1, GTF2E2, GTF2F1, GTF2F2, TCEA1, ERCC2, ERCC3, GTF2H2, GTF2H3, GTF2H4, GTF2H5, GTF2A1, GTF2A2, GTF2B and TBP; this large multi-subunit PIC complex mediates DNA unwinding and targets Pol II core to the transcription start site where the first phosphodiester bond forms. As to quaternary structure, (Microbial infection) Interacts with Epstein-Barr virus EBNA2. Post-translationally, phosphorylation on Ser-751 by CK2 controls the 5'-excision activity of ERCC1-XPF endonuclease; phosphorylated protein inhibits the excision activity and thus NER. Dephosphorylation reactivates the 5'-excision step. Phosphorylation has no effect on transcription or the 3'-5' helicase activity.

It is found in the nucleus. The enzyme catalyses Couples ATP hydrolysis with the unwinding of duplex DNA by translocating in the 3'-5' direction.. The catalysed reaction is ATP + H2O = ADP + phosphate + H(+). With respect to regulation, phosphorylation on Ser-751 by CK2 controls the 5'-excision activity of ERCC1-XPF endonuclease; phosphorylated protein inhibits the excision activity and thus NER. ATPase activity is stimulated by TFIIH subunit p52 (GTF2H4). DNA translocase activity by this subunit in TFIIH is stimulated by XPA, ERCC5/XPG and XFP plus ERCC1; translocase activity is sensitive to triptolide which targets this enzyme. In terms of biological role, ATP-dependent 3'-5' DNA helicase/translocase. Binds dsDNA rather than ssDNA, unzipping it in a translocase rather than classical helicase activity. Component of the general transcription and DNA repair factor IIH (TFIIH) core complex. When complexed to CDK-activating kinase (CAK), involved in RNA transcription by RNA polymerase II. The ATPase activity of XPB/ERCC3, but not its helicase activity, is required for DNA opening; it may wrap around the damaged DNA wedging it open, causing localized melting that allows XPD/ERCC2 helicase to anchor. In transcription, TFIIH has an essential role in transcription initiation. When the pre-initiation complex (PIC) has been established, TFIIH is required for promoter opening and promoter escape. The ATP-dependent helicase activity of XPB/ERCC3 is required for promoter opening and promoter escape. In transcription pre-initiation complexes induces and propagates a DNA twist to open DNA. Also involved in transcription-coupled nucleotide excision repair (NER) of damaged DNA. In NER, TFIIH acts by opening DNA around the lesion to allow the excision of the damaged oligonucleotide and its replacement by a new DNA fragment. The structure of the TFIIH transcription complex differs from the NER-TFIIH complex; large movements by XPD/ERCC2 and XPB/ERCC3 are stabilized by XPA. XPA retains XPB/ERCC3 at the 5' end of a DNA bubble (mimicking DNA damage). This is General transcription and DNA repair factor IIH helicase/translocase subunit XPB from Homo sapiens (Human).